Here is a 497-residue protein sequence, read N- to C-terminus: Acetyl-coenzyme A carboxylase carboxyl transferase subunit beta, chloroplastic (497 aa).

Residues 225–497 (LWVQCENCYG…LHGFLPLNQD (273 aa)) enclose the CoA carboxyltransferase N-terminal domain. Zn(2+) contacts are provided by Cys-229, Cys-232, Cys-248, and Cys-251. Residues 229 to 251 (CENCYGLNYKKFFSSKMNICEYC) form a C4-type zinc finger.

This sequence belongs to the AccD/PCCB family. Acetyl-CoA carboxylase is a heterohexamer composed of biotin carboxyl carrier protein, biotin carboxylase and 2 subunits each of ACCase subunit alpha and ACCase plastid-coded subunit beta (accD). Requires Zn(2+) as cofactor.

The protein localises to the plastid. It is found in the chloroplast stroma. The enzyme catalyses N(6)-carboxybiotinyl-L-lysyl-[protein] + acetyl-CoA = N(6)-biotinyl-L-lysyl-[protein] + malonyl-CoA. Its pathway is lipid metabolism; malonyl-CoA biosynthesis; malonyl-CoA from acetyl-CoA: step 1/1. Component of the acetyl coenzyme A carboxylase (ACC) complex. Biotin carboxylase (BC) catalyzes the carboxylation of biotin on its carrier protein (BCCP) and then the CO(2) group is transferred by the transcarboxylase to acetyl-CoA to form malonyl-CoA. This chain is Acetyl-coenzyme A carboxylase carboxyl transferase subunit beta, chloroplastic, found in Phalaenopsis aphrodite subsp. formosana (Moth orchid).